A 283-amino-acid polypeptide reads, in one-letter code: Pantothenate synthetase 1 (283 aa).

30-37 (MGYLHDGH) is a binding site for ATP. Catalysis depends on His-37, which acts as the Proton donor. Position 61 (Gln-61) interacts with (R)-pantoate. Residue Gln-61 coordinates beta-alanine. An ATP-binding site is contributed by 147-150 (GQKD). Residue Gln-153 coordinates (R)-pantoate. Residues Val-176 and 184-187 (MSSR) contribute to the ATP site.

This sequence belongs to the pantothenate synthetase family. In terms of assembly, homodimer.

It is found in the cytoplasm. It carries out the reaction (R)-pantoate + beta-alanine + ATP = (R)-pantothenate + AMP + diphosphate + H(+). It functions in the pathway cofactor biosynthesis; (R)-pantothenate biosynthesis; (R)-pantothenate from (R)-pantoate and beta-alanine: step 1/1. Catalyzes the condensation of pantoate with beta-alanine in an ATP-dependent reaction via a pantoyl-adenylate intermediate. The sequence is that of Pantothenate synthetase 1 from Bradyrhizobium diazoefficiens (strain JCM 10833 / BCRC 13528 / IAM 13628 / NBRC 14792 / USDA 110).